The sequence spans 127 residues: Holo-[acyl-carrier-protein] synthase (127 aa).

Mg(2+) is bound by residues aspartate 9 and glutamate 58.

The protein belongs to the P-Pant transferase superfamily. AcpS family. It depends on Mg(2+) as a cofactor.

The protein resides in the cytoplasm. It carries out the reaction apo-[ACP] + CoA = holo-[ACP] + adenosine 3',5'-bisphosphate + H(+). Its function is as follows. Transfers the 4'-phosphopantetheine moiety from coenzyme A to a Ser of acyl-carrier-protein. The protein is Holo-[acyl-carrier-protein] synthase of Shewanella sp. (strain ANA-3).